Reading from the N-terminus, the 140-residue chain is Nucleoside diphosphate kinase (140 aa).

The ATP site is built by Lys11, Phe59, Arg87, Thr93, Arg104, and Asn114. The Pros-phosphohistidine intermediate role is filled by His117.

It belongs to the NDK family. As to quaternary structure, homotetramer. The cofactor is Mg(2+).

It is found in the cytoplasm. It carries out the reaction a 2'-deoxyribonucleoside 5'-diphosphate + ATP = a 2'-deoxyribonucleoside 5'-triphosphate + ADP. The catalysed reaction is a ribonucleoside 5'-diphosphate + ATP = a ribonucleoside 5'-triphosphate + ADP. In terms of biological role, major role in the synthesis of nucleoside triphosphates other than ATP. The ATP gamma phosphate is transferred to the NDP beta phosphate via a ping-pong mechanism, using a phosphorylated active-site intermediate. The sequence is that of Nucleoside diphosphate kinase from Rickettsia canadensis (strain McKiel).